Consider the following 221-residue polypeptide: Thiopurine S-methyltransferase (221 aa).

The S-adenosyl-L-methionine site is built by Trp12, Leu47, Glu68, and Arg125.

Belongs to the class I-like SAM-binding methyltransferase superfamily. TPMT family.

It is found in the cytoplasm. It catalyses the reaction S-adenosyl-L-methionine + a thiopurine = S-adenosyl-L-homocysteine + a thiopurine S-methylether.. The sequence is that of Thiopurine S-methyltransferase from Legionella pneumophila (strain Paris).